Reading from the N-terminus, the 506-residue chain is Bifunctional purine biosynthesis protein PurH (506 aa).

Residues 1–146 enclose the MGS-like domain; it reads MARLALLSVS…KNFAHLTVLC (146 aa).

It belongs to the PurH family.

It carries out the reaction (6R)-10-formyltetrahydrofolate + 5-amino-1-(5-phospho-beta-D-ribosyl)imidazole-4-carboxamide = 5-formamido-1-(5-phospho-D-ribosyl)imidazole-4-carboxamide + (6S)-5,6,7,8-tetrahydrofolate. The catalysed reaction is IMP + H2O = 5-formamido-1-(5-phospho-D-ribosyl)imidazole-4-carboxamide. Its pathway is purine metabolism; IMP biosynthesis via de novo pathway; 5-formamido-1-(5-phospho-D-ribosyl)imidazole-4-carboxamide from 5-amino-1-(5-phospho-D-ribosyl)imidazole-4-carboxamide (10-formyl THF route): step 1/1. It participates in purine metabolism; IMP biosynthesis via de novo pathway; IMP from 5-formamido-1-(5-phospho-D-ribosyl)imidazole-4-carboxamide: step 1/1. The polypeptide is Bifunctional purine biosynthesis protein PurH (Trichormus variabilis (strain ATCC 29413 / PCC 7937) (Anabaena variabilis)).